Reading from the N-terminus, the 327-residue chain is Probable cell division protein WhiA (327 aa).

Residues 275 to 308 constitute a DNA-binding region (H-T-H motif); it reads SLEELGRLADPPMTKDAVAGRIRRLLSMADRKAK. The disordered stretch occupies residues 304-327; the sequence is DRKAKQDGIPDTESAVTPDLLEDA.

It belongs to the WhiA family.

Its function is as follows. Involved in cell division and chromosome segregation. The polypeptide is Probable cell division protein WhiA (Mycolicibacterium gilvum (strain PYR-GCK) (Mycobacterium gilvum (strain PYR-GCK))).